Consider the following 398-residue polypeptide: Endoglucanase (398 aa).

The N-terminal stretch at 1 to 23 is a signal peptide; it reads MSPLKCMALAALGAVMFVGSAQA. The active-site Proton donor is the Glu58. Asp119 functions as the Nucleophile in the catalytic mechanism.

It belongs to the glycosyl hydrolase 8 (cellulase D) family.

Its subcellular location is the secreted. The enzyme catalyses Endohydrolysis of (1-&gt;4)-beta-D-glucosidic linkages in cellulose, lichenin and cereal beta-D-glucans.. It participates in glycan metabolism; bacterial cellulose biosynthesis. Its function is as follows. Hydrolyzes carboxymethylcellulose. The sequence is that of Endoglucanase (bcsZ) from Pseudomonas fluorescens (strain SBW25).